The following is a 310-amino-acid chain: HPr kinase/phosphorylase (310 aa).

Residues histidine 138 and lysine 159 contribute to the active site. 153-160 (GKSGVGKS) is a binding site for ATP. Serine 160 is a Mg(2+) binding site. Residue aspartate 177 is the Proton acceptor; for phosphorylation activity. Proton donor; for dephosphorylation activity of the active site. Residues 201 to 210 (LEIRGLGIIN) form an important for the catalytic mechanism of both phosphorylation and dephosphorylation region. Residue glutamate 202 participates in Mg(2+) binding. Residue arginine 243 is part of the active site. The important for the catalytic mechanism of dephosphorylation stretch occupies residues 264 to 269 (PVRPGR).

Belongs to the HPrK/P family. In terms of assembly, homohexamer. The cofactor is Mg(2+).

The enzyme catalyses [HPr protein]-L-serine + ATP = [HPr protein]-O-phospho-L-serine + ADP + H(+). It catalyses the reaction [HPr protein]-O-phospho-L-serine + phosphate + H(+) = [HPr protein]-L-serine + diphosphate. Its function is as follows. Catalyzes the ATP- as well as the pyrophosphate-dependent phosphorylation of a specific serine residue in HPr, a phosphocarrier protein of the phosphoenolpyruvate-dependent sugar phosphotransferase system (PTS). HprK/P also catalyzes the pyrophosphate-producing, inorganic phosphate-dependent dephosphorylation (phosphorolysis) of seryl-phosphorylated HPr (P-Ser-HPr). The two antagonistic activities of HprK/P are regulated by several intracellular metabolites, which change their concentration in response to the absence or presence of rapidly metabolisable carbon sources (glucose, fructose, etc.) in the growth medium. Also phosphorylates/dephosphorylates the HPr-like catabolite repression protein crh on a specific serine residue. Therefore, by controlling the phosphorylation state of HPr and crh, HPrK/P is a sensor enzyme that plays a major role in the regulation of carbon metabolism and sugar transport: it mediates carbon catabolite repression (CCR), and regulates PTS-catalyzed carbohydrate uptake and inducer exclusion. This is HPr kinase/phosphorylase from Bacillus licheniformis (strain ATCC 14580 / DSM 13 / JCM 2505 / CCUG 7422 / NBRC 12200 / NCIMB 9375 / NCTC 10341 / NRRL NRS-1264 / Gibson 46).